The chain runs to 209 residues: NAD(P)H dehydrogenase (quinone) (209 aa).

One can recognise a Flavodoxin-like domain in the interval 4 to 199 (VNIIFHSVHA…EMARYQGRHV (196 aa)). FMN contacts are provided by residues 10-15 (SVHAHI) and 87-89 (TRY). Trp107 provides a ligand contact to substrate. FMN contacts are provided by residues 122 to 128 (SSGTQHG) and His143.

It belongs to the WrbA family. The cofactor is FMN.

It carries out the reaction a quinone + NADH + H(+) = a quinol + NAD(+). The catalysed reaction is a quinone + NADPH + H(+) = a quinol + NADP(+). The protein is NAD(P)H dehydrogenase (quinone) of Methanosarcina mazei (strain ATCC BAA-159 / DSM 3647 / Goe1 / Go1 / JCM 11833 / OCM 88) (Methanosarcina frisia).